We begin with the raw amino-acid sequence, 255 residues long: MKPISNPMGLSPTKQNVYDSVVLTTLQDVSNWVRLSSLWPLLYGTSCCFIEFASLIGSRFDFDRYGLVPRSSPRQADLIITAGTVTMKMAPSLVRLYEQMPEPKYVIAMGACTITGGMFSTDSYSTVRGVDKLIPVDVYLPGCPPKPEAIVDAIIKLRKKVAQENGQDRLNQNQQHRCFSVTHRLQPVPAVHNGEYERNITRQVPSISLDSTLQSPFEQILQSSFESVSETTLIDSQRYDNQYLQGAEIETGGLE.

Residues C47, C48, C112, and C143 each contribute to the [4Fe-4S] cluster site.

Belongs to the complex I 20 kDa subunit family. NDH is composed of at least 16 different subunits, 5 of which are encoded in the nucleus. Requires [4Fe-4S] cluster as cofactor.

The protein resides in the plastid. It is found in the chloroplast thylakoid membrane. It carries out the reaction a plastoquinone + NADH + (n+1) H(+)(in) = a plastoquinol + NAD(+) + n H(+)(out). It catalyses the reaction a plastoquinone + NADPH + (n+1) H(+)(in) = a plastoquinol + NADP(+) + n H(+)(out). NDH shuttles electrons from NAD(P)H:plastoquinone, via FMN and iron-sulfur (Fe-S) centers, to quinones in the photosynthetic chain and possibly in a chloroplast respiratory chain. The immediate electron acceptor for the enzyme in this species is believed to be plastoquinone. Couples the redox reaction to proton translocation, and thus conserves the redox energy in a proton gradient. The protein is NAD(P)H-quinone oxidoreductase subunit K, chloroplastic of Zygnema circumcarinatum (Green alga).